The following is a 254-amino-acid chain: Glucosamine-6-phosphate deaminase (254 aa).

Asp-65 serves as the catalytic Proton acceptor; for enolization step. Residue Asn-134 is the For ring-opening step of the active site. His-136 serves as the catalytic Proton acceptor; for ring-opening step. Glu-141 (for ring-opening step) is an active-site residue.

The protein belongs to the glucosamine/galactosamine-6-phosphate isomerase family. NagB subfamily.

The enzyme catalyses alpha-D-glucosamine 6-phosphate + H2O = beta-D-fructose 6-phosphate + NH4(+). The protein operates within amino-sugar metabolism; N-acetylneuraminate degradation; D-fructose 6-phosphate from N-acetylneuraminate: step 5/5. Functionally, catalyzes the reversible isomerization-deamination of glucosamine 6-phosphate (GlcN6P) to form fructose 6-phosphate (Fru6P) and ammonium ion. The sequence is that of Glucosamine-6-phosphate deaminase from Corynebacterium aurimucosum (strain ATCC 700975 / DSM 44827 / CIP 107346 / CN-1) (Corynebacterium nigricans).